Consider the following 426-residue polypeptide: Serine hydroxymethyltransferase (426 aa).

(6S)-5,6,7,8-tetrahydrofolate is bound by residues L113 and 117-119; that span reads GHL. Position 222 is an N6-(pyridoxal phosphate)lysine (K222). 363-365 contributes to the (6S)-5,6,7,8-tetrahydrofolate binding site; sequence SPF.

The protein belongs to the SHMT family. As to quaternary structure, homodimer. It depends on pyridoxal 5'-phosphate as a cofactor.

The protein resides in the cytoplasm. It carries out the reaction (6R)-5,10-methylene-5,6,7,8-tetrahydrofolate + glycine + H2O = (6S)-5,6,7,8-tetrahydrofolate + L-serine. The protein operates within one-carbon metabolism; tetrahydrofolate interconversion. It functions in the pathway amino-acid biosynthesis; glycine biosynthesis; glycine from L-serine: step 1/1. Its function is as follows. Catalyzes the reversible interconversion of serine and glycine with tetrahydrofolate (THF) serving as the one-carbon carrier. This reaction serves as the major source of one-carbon groups required for the biosynthesis of purines, thymidylate, methionine, and other important biomolecules. Also exhibits THF-independent aldolase activity toward beta-hydroxyamino acids, producing glycine and aldehydes, via a retro-aldol mechanism. This chain is Serine hydroxymethyltransferase, found in Azobacteroides pseudotrichonymphae genomovar. CFP2.